A 462-amino-acid chain; its full sequence is Probable threonine/serine transporter YbxG (462 aa).

A run of 12 helical transmembrane segments spans residues 17 to 37 (MIALGGTIGVGLFMGSASTIS), 38 to 58 (WTGPSVLLAYAICGIFIFFIM), 89 to 109 (ITAWSNWFQWIIVGMSEIIAV), 121 to 141 (PAWIPGIVAMVILGAANLISV), 154 to 174 (IKIVTIILMIIAGIGIIFFGF), 190 to 210 (GGFFAGGFSGFFFALSLVIAA), 238 to 258 (IIWRILIFYIGAIFVIVTVYP), 276 to 296 (IGITAAAGIINFVVITAAMSG), 331 to 351 (LYGTIAVLIGLAVGVVLNYIA), 355 to 375 (IFVYVYSASVLPGMIPWFIIL), 398 to 418 (FAPFTNYLTIAFLLMVLVGMW), and 427 to 447 (LIVGVIFLALVVISYYVFGIG).

It belongs to the amino acid-polyamine-organocation (APC) superfamily.

It is found in the cell membrane. Its function is as follows. Probable threonine transporter. Is also active as a minor serine permease. The chain is Probable threonine/serine transporter YbxG (ybxG) from Bacillus subtilis (strain 168).